The sequence spans 707 residues: E3 ubiquitin-protein ligase Praja-2 (707 aa).

Residues 1–10 show a composition bias toward basic and acidic residues; that stretch reads MSQYTEKEPS. Disordered stretches follow at residues 1 to 23, 75 to 120, and 242 to 290; these read MSQY…AWPR, NTAG…PSVA, and AGDA…CVPG. N-acetylserine is present on Ser2. Positions 109–119 are enriched in polar residues; that stretch reads LNQSTESNPSV. The segment covering 246 to 276 has biased composition (basic and acidic residues); that stretch reads EAVHQDGQEFQRSSEDGIVRKRRQDDTDQGR. Ser306 and Ser320 each carry phosphoserine. Ser339 is modified (phosphoserine; by PKA). 2 disordered regions span residues 380–403 and 424–493; these read VTPR…GRQE and EDSS…QTSL. Residues 381-391 show a composition bias toward basic and acidic residues; that stretch reads TPREAERHRAT. Ser430 carries the post-translational modification Phosphoserine. A compositionally biased stretch (acidic residues) spans 465–481; sequence NEPELQSDSSGPEEENQ. The span at 482 to 491 shows a compositional bias: polar residues; the sequence is ELSLQEGEQT. The segment at 530-707 is interaction with PRKAR1A, PRKAR2A and PRKAR2B; it reads DGNNNLEDDS…PANDNAEEAP (178 aa). The tract at residues 549–569 is mediates interaction with TBC1D31; that stretch reads WSLFDGFADGLGVAEAISYVD. Residues 633 to 674 form an RING-type; atypical zinc finger; that stretch reads CPICCSEYIKDDIATELPCHHFFHKPCVSIWLQKSGTCPVCR. Residues 686-707 form a disordered region; that stretch reads AAASSEPDLDASPANDNAEEAP.

In terms of assembly, binds ubiquitin-conjugating enzymes (E2s). In vitro, interacts with the ubiquitin-conjugating enzyme, UBE2D2. The phosphorylated form interacts with PRKAR1A, PRKAR2A and PRKAR2B. Binds the catalytic subunits of cAMP-dependent protein kinase. Interacts with MFHAS1. Interacts with TBC1D31; the interaction is direct and recruits PJA2 to centrosomes. As to expression, highly expressed in the brain, in nerve cells but not in glial cells. Abundantly expressed in pyramidal neurons and in the CA3 region of apical dendrites. Colocalizes with PRKAR2B in dentate granule cells and at postsynaptic sites of primary hippocampal neurons.

It is found in the cytoplasm. It localises to the cell membrane. The protein localises to the endoplasmic reticulum membrane. Its subcellular location is the golgi apparatus membrane. The protein resides in the synapse. It is found in the postsynaptic density. It localises to the cytoskeleton. The protein localises to the microtubule organizing center. Its subcellular location is the centrosome. The catalysed reaction is S-ubiquitinyl-[E2 ubiquitin-conjugating enzyme]-L-cysteine + [acceptor protein]-L-lysine = [E2 ubiquitin-conjugating enzyme]-L-cysteine + N(6)-ubiquitinyl-[acceptor protein]-L-lysine.. It participates in protein modification; protein ubiquitination. Its function is as follows. Has E2-dependent E3 ubiquitin-protein ligase activity. Responsible for ubiquitination of cAMP-dependent protein kinase type I and type II-alpha/beta regulatory subunits and for targeting them for proteasomal degradation. Essential for PKA-mediated long-term memory processes. Through the ubiquitination of MFHAS1, positively regulates the TLR2 signaling pathway that leads to the activation of the downstream p38 and JNK MAP kinases and promotes the polarization of macrophages toward the pro-inflammatory M1 phenotype. Plays a role in ciliogenesis by ubiquitinating OFD1. The chain is E3 ubiquitin-protein ligase Praja-2 (Pja2) from Rattus norvegicus (Rat).